Consider the following 874-residue polypeptide: Leucine--tRNA ligase (874 aa).

The 'HIGH' region signature appears at 43–53; that stretch reads PYPSGRIHIGH. The tract at residues 614–634 is disordered; it reads LDDGSPVTVGPPEKMSKSKKN. A 'KMSKS' region motif is present at residues 627–631; it reads KMSKS. Residue Lys630 participates in ATP binding.

This sequence belongs to the class-I aminoacyl-tRNA synthetase family.

It is found in the cytoplasm. It carries out the reaction tRNA(Leu) + L-leucine + ATP = L-leucyl-tRNA(Leu) + AMP + diphosphate. The sequence is that of Leucine--tRNA ligase from Azorhizobium caulinodans (strain ATCC 43989 / DSM 5975 / JCM 20966 / LMG 6465 / NBRC 14845 / NCIMB 13405 / ORS 571).